The sequence spans 229 residues: Ribosomal RNA large subunit methyltransferase E (229 aa).

Positions 1–20 are disordered; the sequence is MSRAGNGGRQRIKTAKGRSA. Gly75, Trp77, Asp94, Asp110, and Asp134 together coordinate S-adenosyl-L-methionine. Lys174 (proton acceptor) is an active-site residue.

It belongs to the class I-like SAM-binding methyltransferase superfamily. RNA methyltransferase RlmE family.

It is found in the cytoplasm. It carries out the reaction uridine(2552) in 23S rRNA + S-adenosyl-L-methionine = 2'-O-methyluridine(2552) in 23S rRNA + S-adenosyl-L-homocysteine + H(+). Specifically methylates the uridine in position 2552 of 23S rRNA at the 2'-O position of the ribose in the fully assembled 50S ribosomal subunit. The polypeptide is Ribosomal RNA large subunit methyltransferase E (Rhizorhabdus wittichii (strain DSM 6014 / CCUG 31198 / JCM 15750 / NBRC 105917 / EY 4224 / RW1) (Sphingomonas wittichii)).